A 655-amino-acid chain; its full sequence is Probable replication restart protein PriA (655 aa).

8 residues coordinate Zn(2+): Cys368, Cys371, Cys377, Cys380, Cys396, Cys399, Cys408, and Cys411.

Belongs to the helicase family. PriA subfamily. As to quaternary structure, component of the replication restart primosome. Zn(2+) is required as a cofactor.

In terms of biological role, initiates the restart of stalled replication forks, which reloads the replicative helicase on sites other than the origin of replication. Recognizes and binds to abandoned replication forks and remodels them to uncover a helicase loading site. Promotes assembly of the primosome at these replication forks. The chain is Probable replication restart protein PriA from Mycobacterium bovis (strain ATCC BAA-935 / AF2122/97).